Here is an 84-residue protein sequence, read N- to C-terminus: Coiled-coil-helix-coiled-coil-helix domain-containing protein 7 (84 aa).

One can recognise a CHCH domain in the interval 12 to 54 (SNPCLEETDASTKCMDENQYQKDLCTSYFIKYKNCRKFWNGIM). Short sequence motifs (cx9C motif) lie at residues 15 to 25 (CLEETDASTKC) and 36 to 46 (CTSYFIKYKNC). Intrachain disulfides connect cysteine 15–cysteine 46 and cysteine 25–cysteine 36.

Belongs to the CHCHD7 family.

Its subcellular location is the mitochondrion intermembrane space. This chain is Coiled-coil-helix-coiled-coil-helix domain-containing protein 7 (chchd7), found in Xenopus laevis (African clawed frog).